Here is a 66-residue protein sequence, read N- to C-terminus: Large ribosomal subunit protein uL29 (66 aa).

It belongs to the universal ribosomal protein uL29 family.

In Sinorhizobium fredii (strain NBRC 101917 / NGR234), this protein is Large ribosomal subunit protein uL29.